Here is a 758-residue protein sequence, read N- to C-terminus: 5-methyltetrahydropteroyltriglutamate--homocysteine methyltransferase (758 aa).

5-methyltetrahydropteroyltri-L-glutamate is bound by residues 16 to 19 (RELK) and K112. Residues 433-435 (IGS) and E486 each bind L-homocysteine. L-methionine-binding positions include 433 to 435 (IGS) and E486. 5-methyltetrahydropteroyltri-L-glutamate-binding positions include 517–518 (RC) and W563. L-homocysteine is bound at residue D601. D601 is an L-methionine binding site. E607 provides a ligand contact to 5-methyltetrahydropteroyltri-L-glutamate. Zn(2+) contacts are provided by H643, C645, and E667. The active-site Proton donor is H696. Zn(2+) is bound at residue C728.

It belongs to the vitamin-B12 independent methionine synthase family. It depends on Zn(2+) as a cofactor.

It catalyses the reaction 5-methyltetrahydropteroyltri-L-glutamate + L-homocysteine = tetrahydropteroyltri-L-glutamate + L-methionine. The protein operates within amino-acid biosynthesis; L-methionine biosynthesis via de novo pathway; L-methionine from L-homocysteine (MetE route): step 1/1. In terms of biological role, catalyzes the transfer of a methyl group from 5-methyltetrahydrofolate to homocysteine resulting in methionine formation. The sequence is that of 5-methyltetrahydropteroyltriglutamate--homocysteine methyltransferase from Neisseria gonorrhoeae (strain ATCC 700825 / FA 1090).